The sequence spans 1106 residues: Carbamoyl phosphate synthase large chain (1106 aa).

The interval 1–401 is carboxyphosphate synthetic domain; sequence MPKRNDLNKV…AFLKALRSLE (401 aa). 12 residues coordinate ATP: Arg-129, Arg-169, Gly-175, Gly-176, Arg-208, Val-210, Glu-215, Gly-241, Val-242, His-243, Gln-284, and Glu-298. Positions 133-327 constitute an ATP-grasp 1 domain; sequence KTTMNDIGEP…IARVASKIAI (195 aa). Residues Gln-284, Glu-298, and Asn-300 each contribute to the Mg(2+) site. Residues Gln-284, Glu-298, and Asn-300 each coordinate Mn(2+). An oligomerization domain region spans residues 402-577; it reads IDLDDLHQSI…YSAYNEENEA (176 aa). The interval 578-964 is carbamoyl phosphate synthetic domain; sequence IPPSEPTHDK…ALYKAMLASG (387 aa). The region spanning 706–896 is the ATP-grasp 2 domain; sequence DQLLNKLGID…MVKIATKAMM (191 aa). ATP is bound by residues Arg-742, Gln-781, Leu-783, Glu-787, Gly-812, Val-813, His-814, Ser-815, Gln-855, and Glu-867. Positions 855, 867, and 869 each coordinate Mg(2+). Mn(2+) is bound by residues Gln-855, Glu-867, and Asn-869. Positions 965–1106 constitute an MGS-like domain; it reads FSINLNGGVL…LQDYLKELSN (142 aa). The allosteric domain stretch occupies residues 965-1106; that stretch reads FSINLNGGVL…LQDYLKELSN (142 aa).

Belongs to the CarB family. In terms of assembly, composed of two chains; the small (or glutamine) chain promotes the hydrolysis of glutamine to ammonia, which is used by the large (or ammonia) chain to synthesize carbamoyl phosphate. Tetramer of heterodimers (alpha,beta)4. It depends on Mg(2+) as a cofactor. Requires Mn(2+) as cofactor.

The enzyme catalyses hydrogencarbonate + L-glutamine + 2 ATP + H2O = carbamoyl phosphate + L-glutamate + 2 ADP + phosphate + 2 H(+). The catalysed reaction is hydrogencarbonate + NH4(+) + 2 ATP = carbamoyl phosphate + 2 ADP + phosphate + 2 H(+). The protein operates within amino-acid biosynthesis; L-arginine biosynthesis; carbamoyl phosphate from bicarbonate: step 1/1. It functions in the pathway pyrimidine metabolism; UMP biosynthesis via de novo pathway; (S)-dihydroorotate from bicarbonate: step 1/3. Its function is as follows. Large subunit of the glutamine-dependent carbamoyl phosphate synthetase (CPSase). CPSase catalyzes the formation of carbamoyl phosphate from the ammonia moiety of glutamine, carbonate, and phosphate donated by ATP, constituting the first step of 2 biosynthetic pathways, one leading to arginine and/or urea and the other to pyrimidine nucleotides. The large subunit (synthetase) binds the substrates ammonia (free or transferred from glutamine from the small subunit), hydrogencarbonate and ATP and carries out an ATP-coupled ligase reaction, activating hydrogencarbonate by forming carboxy phosphate which reacts with ammonia to form carbamoyl phosphate. The protein is Carbamoyl phosphate synthase large chain of Natranaerobius thermophilus (strain ATCC BAA-1301 / DSM 18059 / JW/NM-WN-LF).